Reading from the N-terminus, the 488-residue chain is Beta-amylase (488 aa).

Residues Asp51, His91, and Asp99 each contribute to the substrate site. Glu184 (proton donor) is an active-site residue. 3 residues coordinate substrate: Lys293, His298, and Thr340. The active-site Proton acceptor is Glu378. Substrate contacts are provided by residues 379–380 (NA) and Arg418.

The protein belongs to the glycosyl hydrolase 14 family.

It catalyses the reaction Hydrolysis of (1-&gt;4)-alpha-D-glucosidic linkages in polysaccharides so as to remove successive maltose units from the non-reducing ends of the chains.. This Zea mays (Maize) protein is Beta-amylase (BMY1).